The sequence spans 508 residues: Methionine--tRNA ligase (508 aa).

Positions 12-22 (YYVNDVAHIGH) match the 'HIGH' region motif. The short motif at 295–299 (KISKS) is the 'KMSKS' region element. Lysine 298 lines the ATP pocket.

The protein belongs to the class-I aminoacyl-tRNA synthetase family. MetG type 2B subfamily. Monomer.

Its subcellular location is the cytoplasm. It catalyses the reaction tRNA(Met) + L-methionine + ATP = L-methionyl-tRNA(Met) + AMP + diphosphate. Functionally, is required not only for elongation of protein synthesis but also for the initiation of all mRNA translation through initiator tRNA(fMet) aminoacylation. This chain is Methionine--tRNA ligase (metG), found in Rickettsia prowazekii (strain Madrid E).